The sequence spans 1023 residues: 2-oxoglutarate dehydrogenase complex component E1 (1023 aa).

Residues 1–40 (MFHLRTCAAKLRPLTASQTVKTFSQNRPAAARTFGQIRCY) constitute a mitochondrion transit peptide. N6-succinyllysine is present on K74. A Phosphoserine modification is found at S100. Ca(2+) contacts are provided by H143, D156, and D158. Position 312 (R312) interacts with thiamine diphosphate. N6-acetyllysine is present on K401. Positions 411, 444, and 446 each coordinate thiamine diphosphate. Residues D411, N444, and I446 each contribute to the Mg(2+) site. A Glycyl lysine isopeptide (Lys-Gly) (interchain with G-Cter in ubiquitin) cross-link involves residue K534. K564 carries the N6-succinyllysine modification. Q676 is a thiamine diphosphate binding site. K970 bears the N6-acetyllysine mark.

Belongs to the alpha-ketoglutarate dehydrogenase family. As to quaternary structure, homodimer. The 2-oxoglutarate dehydrogenase complex is composed of OGDH (2-oxoglutarate dehydrogenase; E1), DLST (dihydrolipoamide succinyltransferase; E2), DLD (dihydrolipoamide dehydrogenase; E3) and the assembly factor KGD4. It contains multiple copies of the three enzymatic components (E1, E2 and E3). In the nucleus, the 2-oxoglutarate dehydrogenase complex associates with KAT2A. Interacts with ABHD11; this interaction maintains the functional lipoylation of the 2-oxoglutarate dehydrogenase complex. Requires thiamine diphosphate as cofactor. Mg(2+) is required as a cofactor.

It localises to the mitochondrion. It is found in the nucleus. The catalysed reaction is N(6)-[(R)-lipoyl]-L-lysyl-[protein] + 2-oxoglutarate + H(+) = N(6)-[(R)-S(8)-succinyldihydrolipoyl]-L-lysyl-[protein] + CO2. Calcium ions and ADP stimulate, whereas ATP and NADH reduce catalytic activity. Its function is as follows. 2-oxoglutarate dehydrogenase (E1o) component of the 2-oxoglutarate dehydrogenase complex (OGDHC). Participates in the first step, rate limiting for the overall conversion of 2-oxoglutarate to succinyl-CoA and CO(2) catalyzed by the whole OGDHC. Catalyzes the irreversible decarboxylation of 2-oxoglutarate (alpha-ketoglutarate) via the thiamine diphosphate (ThDP) cofactor and subsequent transfer of the decarboxylated acyl intermediate on an oxidized dihydrolipoyl group that is covalently amidated to the E2 enzyme (dihydrolipoyllysine-residue succinyltransferase or DLST). Plays a key role in the Krebs (citric acid) cycle, which is a common pathway for oxidation of fuel molecules, including carbohydrates, fatty acids, and amino acids. Can catalyze the decarboxylation of 2-oxoadipate in vitro, but at a much lower rate than 2-oxoglutarate. Mainly active in the mitochondrion. A fraction of the 2-oxoglutarate dehydrogenase complex also localizes in the nucleus and is required for lysine succinylation of histones: associates with KAT2A on chromatin and provides succinyl-CoA to histone succinyltransferase KAT2A. The polypeptide is 2-oxoglutarate dehydrogenase complex component E1 (Bos taurus (Bovine)).